The primary structure comprises 176 residues: Ribose 1,5-bisphosphate phosphokinase PhnN (176 aa).

ATP is bound at residue 10-17; the sequence is GPSGAGKD.

It belongs to the ribose 1,5-bisphosphokinase family.

The catalysed reaction is alpha-D-ribose 1,5-bisphosphate + ATP = 5-phospho-alpha-D-ribose 1-diphosphate + ADP. It functions in the pathway metabolic intermediate biosynthesis; 5-phospho-alpha-D-ribose 1-diphosphate biosynthesis; 5-phospho-alpha-D-ribose 1-diphosphate from D-ribose 5-phosphate (route II): step 3/3. Catalyzes the phosphorylation of ribose 1,5-bisphosphate to 5-phospho-D-ribosyl alpha-1-diphosphate (PRPP). In Methylobacterium radiotolerans (strain ATCC 27329 / DSM 1819 / JCM 2831 / NBRC 15690 / NCIMB 10815 / 0-1), this protein is Ribose 1,5-bisphosphate phosphokinase PhnN.